The primary structure comprises 524 residues: MSSPAPKSPELSDKSKKYDRQIRLWGEHGQTLLEAATVCLVNVTAVGCETAKGLVLPGIGGFTVADGSTVKEEDLGNNFFLDSSYLGKSKALACMQLLQELNPDVNGDYVDESADFLLANRPNFFDSFDLVIASNLNEQTLLLLAERLWELNVPLIYCRSLGMLGTIRLQIREHCIVEAHPDNRQFDLRLEHPFDALREHLDGTEVTSKVPWLLVLHKYLNVWQKQQADGTQTPRNYKEKNQLKETIREEMKADEENYEEAIKAVNTAFGAGQVPKSLKAIFEDDACEQLNKKSNVFWIMAKALKHFVIHENEGHLPLPGVLPDMTANTDSYIALQHIYRQQALQDADQVYHKCQEYLKQLALPADSIDERSVRLICKEAAGLAVIRGTRIAEEYEKSSRLLPLVEDNELQGNLTAYNFALRAYERFLSECGNIPGECIVEQDIGRLKSIAAKMLSDLGMHATISDDVLHEICRYGGAELHAVSAFIGGCAAQEVIKIITKQYKPIDNTFIYNAITTESVTLKL.

Belongs to the ubiquitin-activating E1 family. ULA1 subfamily. As to quaternary structure, heterodimer of Uba3 and APP-BP1. The complex binds Nedd8 and UbcE2M. Interacts with Appl (via the intracellular domain, ICD).

The protein operates within protein modification; protein neddylation. Regulatory subunit of the dimeric Uba3-APP-BP1 E1 enzyme. E1 activates Nedd8 by first adenylating its C-terminal glycine residue with ATP, thereafter linking this residue to the side chain of the catalytic cysteine, yielding a Nedd8-Uba3 thioester and free AMP. E1 finally transfers Nedd8 to the catalytic cysteine of UbcE2M. Required for Cul1 and Cul3 neddylation. Appl and APP-BP1 interact antagonistically during development. The polypeptide is Nedd8-activating enzyme E1 regulatory subunit (APP-BP1) (Drosophila melanogaster (Fruit fly)).